Consider the following 249-residue polypeptide: ATP synthase subunit a (249 aa).

Helical transmembrane passes span 33–53, 92–112, 131–151, 196–216, and 217–237; these read GQVI…SIAA, LPFI…GALI, INTT…AGIS, LVVA…LMAL, and GLFT…AYIH.

This sequence belongs to the ATPase A chain family. As to quaternary structure, F-type ATPases have 2 components, CF(1) - the catalytic core - and CF(0) - the membrane proton channel. CF(1) has five subunits: alpha(3), beta(3), gamma(1), delta(1), epsilon(1). CF(0) has four main subunits: a, b, b' and c.

It localises to the cellular thylakoid membrane. Its function is as follows. Key component of the proton channel; it plays a direct role in the translocation of protons across the membrane. The chain is ATP synthase subunit a from Microcystis aeruginosa (strain NIES-843 / IAM M-2473).